The primary structure comprises 1128 residues: GTPase-activating protein BEM3 (1128 aa).

Residues 194–241 (SSPTKIHSEQLASPAASVTYTTSRITIKSPNKGSKSPLQERLRSPQNP) are disordered. A compositionally biased stretch (polar residues) spans 209–230 (ASVTYTTSRITIKSPNKGSKSP). S254 is modified (phosphoserine). Disordered regions lie at residues 345 to 391 (EDLV…TPLS) and 418 to 486 (PVLT…RPHA). Pro residues predominate over residues 366 to 375 (LPPPPAPPTF). Polar residues-rich tracts occupy residues 382-391 (GNIKNSTPLS) and 420-478 (LTSS…QGSL). A PH domain is found at 634-741 (DNVKDGSLLL…WLSAFSDYID (108 aa)). 2 disordered regions span residues 746–777 (LSLS…NATI) and 796–838 (NNNI…DSRR). A compositionally biased stretch (polar residues) spans 752–764 (RNANDTDSASHLS). Residues 796-815 (NNNISNSSNNIANSDGIDSN) are compositionally biased toward low complexity. Residues 816–829 (PSSHSNFLASSSGN) show a composition bias toward polar residues. One can recognise a Rho-GAP domain in the interval 913-1128 (LRLSSHKYQN…EKVDIHIPQV (216 aa)).

The protein localises to the cytoplasm. In terms of biological role, GTPase-activating protein (GAP) for CDC42 and less efficiently for RHO1. Negative regulator of the pheromone-response pathway through the STE20 protein kinase. This chain is GTPase-activating protein BEM3 (BEM3), found in Saccharomyces cerevisiae (strain ATCC 204508 / S288c) (Baker's yeast).